A 214-amino-acid polypeptide reads, in one-letter code: Probable transaldolase (214 aa).

Lys83 acts as the Schiff-base intermediate with substrate in catalysis.

It belongs to the transaldolase family. Type 3B subfamily.

Its subcellular location is the cytoplasm. It catalyses the reaction D-sedoheptulose 7-phosphate + D-glyceraldehyde 3-phosphate = D-erythrose 4-phosphate + beta-D-fructose 6-phosphate. It participates in carbohydrate degradation; pentose phosphate pathway; D-glyceraldehyde 3-phosphate and beta-D-fructose 6-phosphate from D-ribose 5-phosphate and D-xylulose 5-phosphate (non-oxidative stage): step 2/3. Its function is as follows. Transaldolase is important for the balance of metabolites in the pentose-phosphate pathway. In Streptococcus pyogenes serotype M1, this protein is Probable transaldolase (tal).